Reading from the N-terminus, the 341-residue chain is MKRSYSLAELARYLDAELKGDPDYEIRALATLQSASAHQLGFIANPVYQKYLATTQAGALLLRPDFSEYYSGHQLLVANPYQAYAHVSALFDPSVEFSPGIHPTAVIGDGCHLGHGVSIAAHVVLGANVSLGDGAALGPGTVIGDDCHIGARTRLAANVTLYQGVSLGDDCILHAGCVLGADGFGFAPSAGGWIKIHQLGSVVVGNRVEIGASTCIDRGALDDTRIEDGVIIDNLVQIAHNVRIGKNTAIAGHTAIAGSTQIGANCTIAGAVGIVGHLHITDGVHITAMTLVTHSIDKPGSYSSGTPMSQTREWRKNAARFRQLDGLANRLIKIERDQSAE.

H240 serves as the catalytic Proton acceptor.

Belongs to the transferase hexapeptide repeat family. LpxD subfamily. In terms of assembly, homotrimer.

The enzyme catalyses a UDP-3-O-[(3R)-3-hydroxyacyl]-alpha-D-glucosamine + a (3R)-hydroxyacyl-[ACP] = a UDP-2-N,3-O-bis[(3R)-3-hydroxyacyl]-alpha-D-glucosamine + holo-[ACP] + H(+). It participates in bacterial outer membrane biogenesis; LPS lipid A biosynthesis. Its function is as follows. Catalyzes the N-acylation of UDP-3-O-acylglucosamine using 3-hydroxyacyl-ACP as the acyl donor. Is involved in the biosynthesis of lipid A, a phosphorylated glycolipid that anchors the lipopolysaccharide to the outer membrane of the cell. This is UDP-3-O-acylglucosamine N-acyltransferase from Cellvibrio japonicus (strain Ueda107) (Pseudomonas fluorescens subsp. cellulosa).